The chain runs to 962 residues: Translation initiation factor IF-2 (962 aa).

The interval 101–366 (AAQTQAAPVR…KKGKKLKLEP (266 aa)) is disordered. A compositionally biased stretch (basic and acidic residues) spans 117–141 (DAAKARAEAATRAEARAKAEAEAAK). Low complexity predominate over residues 145 to 157 (AKAGNKAKPAAQK). The segment covering 173-216 (KPAEESKAEKAQADKMPSKKPAEPKEKAAKPKHERNGKGKDAKK) has biased composition (basic and acidic residues). A compositionally biased stretch (low complexity) spans 219-234 (KPAAPAVPQPVVSAEE). Over residues 235 to 269 (QAQRDEEARRAAALRAHQEALLKEKQERQARREAM) the composition is skewed to basic and acidic residues. Residues 270–283 (KQQAEQQAKAAQEA) show a composition bias toward low complexity. Basic and acidic residues predominate over residues 338–354 (GGRDRNNARNGDDERVR). The tr-type G domain maps to 462–631 (PRPPVVTVMG…LLEAEVLELT (170 aa)). The interval 471 to 478 (GHVDHGKT) is G1. Residue 471–478 (GHVDHGKT) coordinates GTP. Positions 496 to 500 (GITQH) are G2. Positions 517–520 (DTPG) are G3. GTP is bound by residues 517–521 (DTPGH) and 571–574 (NKID). The interval 571–574 (NKID) is G4. The interval 607-609 (SAK) is G5.

It belongs to the TRAFAC class translation factor GTPase superfamily. Classic translation factor GTPase family. IF-2 subfamily.

It localises to the cytoplasm. Its function is as follows. One of the essential components for the initiation of protein synthesis. Protects formylmethionyl-tRNA from spontaneous hydrolysis and promotes its binding to the 30S ribosomal subunits. Also involved in the hydrolysis of GTP during the formation of the 70S ribosomal complex. This chain is Translation initiation factor IF-2, found in Neisseria meningitidis serogroup A / serotype 4A (strain DSM 15465 / Z2491).